The following is a 492-amino-acid chain: Alpha-2-antiplasmin (492 aa).

The first 22 residues, 1 to 22, serve as a signal peptide directing secretion; the sequence is MALLWGLLALILSCLSSLCSAQ. Residues 23–40 constitute a propeptide that is removed on maturation; it reads FSPVSTMEPLDLQLMDGQ. The tract at residues 56-76 is disordered; it reads QEPGGQIAPKKAPEDCKLSPT. Residues C71 and C144 are joined by a disulfide bond. N-linked (GlcNAc...) asparagine glycans are attached at residues N127, N249, N296, N310, and N317. The tract at residues 433-492 is disordered; it reads SVRNPNPGAQPERKEQQDSPDGKDSFQDHKGLPRGDKPFDPDLKLGPPSEEDYAQPSSPK. Positions 443-475 are enriched in basic and acidic residues; the sequence is PERKEQQDSPDGKDSFQDHKGLPRGDKPFDPDL. Residue Y485 is modified to Sulfotyrosine.

This sequence belongs to the serpin family. Forms protease inhibiting heterodimer with TMPRSS7. Post-translationally, proteolytically cleaved at Pro-31 by both the prolyl endopeptidase FAP form and antiplasmin-cleaving enzyme FAP soluble form to generate mature alpha-2-antiplasmin. In terms of tissue distribution, expressed by the liver and secreted in plasma.

It localises to the secreted. Functionally, serine protease inhibitor. The major targets of this inhibitor are plasmin and trypsin, but it also inactivates matriptase-3/TMPRSS7 and chymotrypsin. The protein is Alpha-2-antiplasmin (SERPINF2) of Bos taurus (Bovine).